Consider the following 404-residue polypeptide: Ubiquitin-like modifier-activating enzyme 5 (404 aa).

Positions 83, 104, 127, 150, and 184 each coordinate ATP. 2 residues coordinate Zn(2+): cysteine 226 and cysteine 229. The Glycyl thioester intermediate role is filled by cysteine 250. Residues cysteine 303 and cysteine 308 each coordinate Zn(2+). The interval 372–393 is disordered; it reads APEKSSETSEETVTAATADETS. Low complexity predominate over residues 382 to 391; that stretch reads ETVTAATADE.

The protein belongs to the ubiquitin-activating E1 family. UBA5 subfamily.

Functionally, E1-like enzyme which activates UFM1. The chain is Ubiquitin-like modifier-activating enzyme 5 from Drosophila simulans (Fruit fly).